The primary structure comprises 385 residues: Ribosomal RNA large subunit methyltransferase G (385 aa).

The protein belongs to the methyltransferase superfamily. RlmG family.

It localises to the cytoplasm. It carries out the reaction guanosine(1835) in 23S rRNA + S-adenosyl-L-methionine = N(2)-methylguanosine(1835) in 23S rRNA + S-adenosyl-L-homocysteine + H(+). Its function is as follows. Specifically methylates the guanine in position 1835 (m2G1835) of 23S rRNA. The protein is Ribosomal RNA large subunit methyltransferase G of Vibrio parahaemolyticus serotype O3:K6 (strain RIMD 2210633).